Consider the following 220-residue polypeptide: uncharacterized protein (220 aa).

An N-terminal signal peptide occupies residues methionine 1–cysteine 25.

In terms of tissue distribution, nacreous layer of shell (at protein level). Expressed primarily in the mantle with highest level in the mantle pallium and lower level in the mantle edge.

The protein resides in the secreted. This is an uncharacterized protein from Margaritifera margaritifera (Freshwater pearl mussel).